The primary structure comprises 231 residues: Cytidylate kinase (231 aa).

18–26 provides a ligand contact to ATP; the sequence is GPSGTGKSS.

Belongs to the cytidylate kinase family. Type 1 subfamily.

Its subcellular location is the cytoplasm. It carries out the reaction CMP + ATP = CDP + ADP. It catalyses the reaction dCMP + ATP = dCDP + ADP. The chain is Cytidylate kinase from Streptomyces avermitilis (strain ATCC 31267 / DSM 46492 / JCM 5070 / NBRC 14893 / NCIMB 12804 / NRRL 8165 / MA-4680).